A 450-amino-acid polypeptide reads, in one-letter code: VGFKAGVKDYKLTYYTPEYETKDTDILAAFRVTPQPGVPPEEAGAAVAAESSTGTWTTVWTDGLTSLDRYKGRCYHIEPVAGEENQYIAYVAYPLDLFEEGSVTNMFTSIVGNVFGFKALRALRLEDLRIPVAYVKTFQGPPHGIQVERDKLNKYGRPLLGCTIKPKLGLSAKNYGRAVYECLRGGLDFTKDDENVNSQPFMRWRDRFLFCAEAIYKSQAETGEIKGHYLNATAGTCEEMMKRAIFARELGVPIVMHDYLTGGFTANTSLAHYCRDNGLLLHIHRAMHAVIDRQKNHGIHFRVLAKALRMSGGDHIHAGTVVGKLEGERDITLGFVDLLRDDFIEKDRSRGIYFTQDWVSLPGVLPVASGGIHVWHMPALTEIFGDDSVLQFGGGTLGHPWGNAPGAVANRVALEACVQARNEGRDLAREGNEIIREACKWSPELAAACE.

Position 4 is an N6,N6,N6-trimethyllysine (Lys-4). Substrate-binding residues include Asn-113 and Thr-163. Lys-165 acts as the Proton acceptor in catalysis. Residue Lys-167 coordinates substrate. Mg(2+)-binding residues include Lys-191, Asp-193, and Glu-194. Lys-191 carries the N6-carboxylysine modification. Catalysis depends on His-284, which acts as the Proton acceptor. Positions 285, 317, and 369 each coordinate substrate.

Belongs to the RuBisCO large chain family. Type I subfamily. Heterohexadecamer of 8 large chains and 8 small chains; disulfide-linked. The disulfide link is formed within the large subunit homodimers. Mg(2+) is required as a cofactor. In terms of processing, the disulfide bond which can form in the large chain dimeric partners within the hexadecamer appears to be associated with oxidative stress and protein turnover.

The protein localises to the plastid. Its subcellular location is the chloroplast. It carries out the reaction 2 (2R)-3-phosphoglycerate + 2 H(+) = D-ribulose 1,5-bisphosphate + CO2 + H2O. The catalysed reaction is D-ribulose 1,5-bisphosphate + O2 = 2-phosphoglycolate + (2R)-3-phosphoglycerate + 2 H(+). Its function is as follows. RuBisCO catalyzes two reactions: the carboxylation of D-ribulose 1,5-bisphosphate, the primary event in carbon dioxide fixation, as well as the oxidative fragmentation of the pentose substrate in the photorespiration process. Both reactions occur simultaneously and in competition at the same active site. This Crassula rupestris subsp. marnieriana (Pygmyweed) protein is Ribulose bisphosphate carboxylase large chain.